A 668-amino-acid chain; its full sequence is Protein PLASTID TRANSCRIPTIONALLY ACTIVE 10 (668 aa).

A chloroplast-targeting transit peptide spans 1–40 (MQICQTKLNFTFPNPTNPNFCKPKALQWSPPRRISLLPCR). The 69-residue stretch at 272 to 340 (GMVCEGTVTT…YRFRFPLELR (69 aa)) folds into the S1 motif domain. Residues 362–391 (RDGDTNPDEIRRDCGRPPEPRKDPGSKPEE) are compositionally biased toward basic and acidic residues. Residues 362 to 394 (RDGDTNPDEIRRDCGRPPEPRKDPGSKPEEEGL) are disordered. Ser-434 carries the phosphoserine modification. The segment at 611–668 (KRKEGSTLASQEEETESEEEEEDDDDFDDFDYSILSDESSIGYSEQQPLVNGTQVLTD) is disordered. A compositionally biased stretch (acidic residues) spans 621–641 (QEEETESEEEEEDDDDFDDFD). Polar residues predominate over residues 646-668 (SDESSIGYSEQQPLVNGTQVLTD).

As to quaternary structure, component of the transcriptionally active chromosome (TAC) complexes. Interacts with PTAC7.

The protein localises to the plastid. It localises to the chloroplast. The chain is Protein PLASTID TRANSCRIPTIONALLY ACTIVE 10 from Arabidopsis thaliana (Mouse-ear cress).